Consider the following 141-residue polypeptide: Hemoglobin subunit alpha-1/2 (141 aa).

The 141-residue stretch at 1-141 folds into the Globin domain; that stretch reads VLSPTDKTNV…VSTVLTSKYR (141 aa). S3 carries the post-translational modification Phosphoserine. An N6-succinyllysine modification is found at K7. Phosphothreonine is present on T8. K11 is subject to N6-succinyllysine. At K16 the chain carries N6-acetyllysine; alternate. At K16 the chain carries N6-succinyllysine; alternate. Position 24 is a phosphotyrosine (Y24). An N6-succinyllysine modification is found at K40. S49 is subject to Phosphoserine. Residue H58 coordinates O2. H87 lines the heme b pocket. Phosphoserine is present on S102. A Phosphothreonine modification is found at T108. S124 is modified (phosphoserine). Phosphothreonine occurs at positions 134 and 137. A Phosphoserine modification is found at S138.

The protein belongs to the globin family. As to quaternary structure, heterotetramer of two alpha chains and two beta chains. In terms of tissue distribution, red blood cells.

In terms of biological role, involved in oxygen transport from the lung to the various peripheral tissues. In Tapirus terrestris (Lowland tapir), this protein is Hemoglobin subunit alpha-1/2.